The primary structure comprises 2381 residues: Protein Ycf2 (2381 aa).

1655–1662 (GPMETGRS) provides a ligand contact to ATP.

It belongs to the Ycf2 family.

Its subcellular location is the plastid. The protein localises to the chloroplast stroma. Its function is as follows. Probable ATPase of unknown function. Its presence in a non-photosynthetic plant (Epifagus virginiana) and experiments in tobacco indicate that it has an essential function which is probably not related to photosynthesis. The chain is Protein Ycf2 from Angiopteris evecta (Mule's foot fern).